A 91-amino-acid polypeptide reads, in one-letter code: Probable Fe(2+)-trafficking protein (91 aa).

Belongs to the Fe(2+)-trafficking protein family.

Functionally, could be a mediator in iron transactions between iron acquisition and iron-requiring processes, such as synthesis and/or repair of Fe-S clusters in biosynthetic enzymes. The chain is Probable Fe(2+)-trafficking protein from Ralstonia nicotianae (strain ATCC BAA-1114 / GMI1000) (Ralstonia solanacearum).